A 484-amino-acid polypeptide reads, in one-letter code: Tribbles (484 aa).

A compositionally biased stretch (polar residues) spans 1–23; that stretch reads MDNSSGQNSRTASSASTSKIVNY. The tract at residues 1–51 is disordered; sequence MDNSSGQNSRTASSASTSKIVNYSSPVSPGVAAATSSSSSSSSSGMSSSQE. A compositionally biased stretch (low complexity) spans 24–49; the sequence is SSPVSPGVAAATSSSSSSSSSGMSSS. Positions 129 to 397 constitute a Protein kinase domain; sequence YRHLVDLTAS…ASHIFLTPWL (269 aa). Composition is skewed to acidic residues over residues 420–437 and 475–484; these read AEEDEGTAADAMDDDEEG and PEPDTDVDMG. Disordered stretches follow at residues 420–443 and 464–484; these read AEEDEGTAADAMDDDEEGLCPLGD and MAQNANGLSTEPEPDTDVDMG.

It belongs to the protein kinase superfamily. CAMK Ser/Thr protein kinase family. Tribbles subfamily. In terms of assembly, interacts with slbo. Interacts with Akt1. Expressed throughout the brain with highest levels of expression detected in the cell body rind and lower levels of expression detected in the neurophil (at protein level).

It is found in the nucleus. Its subcellular location is the cytoplasm. The protein resides in the cell cortex. In terms of biological role, adapter protein that negatively regulates different signaling pathways to coordinate cell differentiation, proliferation, migration and growth. Functions by binding to key regulatory proteins and either blocks their activity or regulates their turnover by the proteasome. In various developing tissues functions as a cell cycle regulator that mediates cell proliferation according to the requirements of the developmental program. Acts by inducing the proteasomal degradation of the CD25 mitotic activators stg and twe at critical stages of development to delay entry into mitosis and thus mediate cell proliferation. During gastrulation, negatively regulates stg to delay mitosis in the ventral region of the embryonic mesoderm thus allowing invagination to be completed before cell division takes place. Delaying stg-dependent mitosis during bristle development and in migrating germline pole cells also arrests their cell divisions, whereas in cystocytes it promotes their cell divisions. Involved in the regulation of the mid-blastula transition; promotes the destruction of twe resulting in the cell cycle arrest in G2 of cycle 14 which delays mitosis and thus reduces cell proliferation allowing cell fate specification and morphogenesis to take place. In germline cells, blocks border cell migration during oogenesis by binding to slbo/C/EBP and promoting its ubiquitination and degradation by the proteasome. May function in a negative feedback loop with slbo to coordinate proper border cell migration. During tissue growth negatively regulates insulin signaling by binding to Akt1 and blocking its phosphorylation-dependent activation. However it may also function downstream in the insulin signaling pathway, acting with Akt1 to direct foxo degradation. Essential for the proper formation of operant place and aversive olfactory memories. The chain is Tribbles from Drosophila melanogaster (Fruit fly).